The sequence spans 252 residues: MFKKLFRQDGNILNSELAEDLPIPRHVAIIMDGNGRWAKKRFLPRIAGHKEGMDVVKRVTRYANAIGIDVLTLYAFSTENWKRPTDEVDFLMKLPVEFFDSFVPELIEENVRVNVMGYRENLPEHTMRAVEKAIADTAHCTGLTLNFALNYGGRSEIITAAKEAMKELVSEGKTSEDLTEELLNDHLMSHGLGDPDLLIRTSGELRLSNFMLWQLAYSEFYFTETHWPDFSKEDFLQAIIEYQNRSRRFGGL.

The active site involves Asp-32. Asp-32 is a binding site for Mg(2+). Substrate is bound by residues 33–36, Trp-37, Arg-45, His-49, and 77–79; these read GNGR and STE. The active-site Proton acceptor is the Asn-80. Substrate is bound by residues Trp-81, Arg-83, Arg-200, and 206 to 208; that span reads RLS. Glu-219 contacts Mg(2+).

Belongs to the UPP synthase family. In terms of assembly, homodimer. Requires Mg(2+) as cofactor.

Functionally, catalyzes the condensation of isopentenyl diphosphate (IPP) with allylic pyrophosphates generating different type of terpenoids. The chain is Isoprenyl transferase from Listeria innocua serovar 6a (strain ATCC BAA-680 / CLIP 11262).